A 332-amino-acid chain; its full sequence is Ribosomal RNA small subunit methyltransferase C (332 aa).

Belongs to the methyltransferase superfamily. RsmC family. Monomer.

Its subcellular location is the cytoplasm. The enzyme catalyses guanosine(1207) in 16S rRNA + S-adenosyl-L-methionine = N(2)-methylguanosine(1207) in 16S rRNA + S-adenosyl-L-homocysteine + H(+). In terms of biological role, specifically methylates the guanine in position 1207 of 16S rRNA in the 30S particle. The sequence is that of Ribosomal RNA small subunit methyltransferase C from Pseudomonas aeruginosa (strain LESB58).